We begin with the raw amino-acid sequence, 324 residues long: Porphobilinogen deaminase 1 (324 aa).

At Cys-249 the chain carries S-(dipyrrolylmethanemethyl)cysteine.

The protein belongs to the HMBS family. Monomer. It depends on dipyrromethane as a cofactor.

The enzyme catalyses 4 porphobilinogen + H2O = hydroxymethylbilane + 4 NH4(+). It functions in the pathway porphyrin-containing compound metabolism; protoporphyrin-IX biosynthesis; coproporphyrinogen-III from 5-aminolevulinate: step 2/4. Tetrapolymerization of the monopyrrole PBG into the hydroxymethylbilane pre-uroporphyrinogen in several discrete steps. The protein is Porphobilinogen deaminase 1 (hemC1) of Streptomyces avermitilis (strain ATCC 31267 / DSM 46492 / JCM 5070 / NBRC 14893 / NCIMB 12804 / NRRL 8165 / MA-4680).